We begin with the raw amino-acid sequence, 433 residues long: Glutamate--tRNA ligase (433 aa).

The 'HIGH' region signature appears at 10-20; that stretch reads PSPTGYLHIGG. The 'KMSKS' region motif lies at 211 to 215; that stretch reads KMSKR. Residue Lys-214 participates in ATP binding.

The protein belongs to the class-I aminoacyl-tRNA synthetase family. Glutamate--tRNA ligase type 1 subfamily. Monomer.

Its subcellular location is the cytoplasm. The catalysed reaction is tRNA(Glu) + L-glutamate + ATP = L-glutamyl-tRNA(Glu) + AMP + diphosphate. In terms of biological role, catalyzes the attachment of glutamate to tRNA(Glu) in a two-step reaction: glutamate is first activated by ATP to form Glu-AMP and then transferred to the acceptor end of tRNA(Glu). This Akkermansia muciniphila (strain ATCC BAA-835 / DSM 22959 / JCM 33894 / BCRC 81048 / CCUG 64013 / CIP 107961 / Muc) protein is Glutamate--tRNA ligase.